The sequence spans 191 residues: 3-isopropylmalate dehydratase small subunit (191 aa).

The protein belongs to the LeuD family. LeuD type 1 subfamily. In terms of assembly, heterodimer of LeuC and LeuD.

It carries out the reaction (2R,3S)-3-isopropylmalate = (2S)-2-isopropylmalate. The protein operates within amino-acid biosynthesis; L-leucine biosynthesis; L-leucine from 3-methyl-2-oxobutanoate: step 2/4. Catalyzes the isomerization between 2-isopropylmalate and 3-isopropylmalate, via the formation of 2-isopropylmaleate. The sequence is that of 3-isopropylmalate dehydratase small subunit from Staphylococcus haemolyticus (strain JCSC1435).